The following is a 279-amino-acid chain: MVWFKRAKPAIRTTDRRDMPEGMWWKCDECGAMLHKKQLEDNFYTCSECGYHFRISPYKYFSLLFDGDKYQEFEDQLRSADPLGFTDTKKYLDRVHDIIEKSGKTEACRNAFGEADGRMLVVSAMDFGFIGGSMGSVVGEKIARAVDKAIDLNAPLLVISQSGGARMMEGAFSLMQMAKTAARLTRLSEKKLPFFSLMTDPTMGGITASFAMLGDVNISEPKALIGFAGPRVIRDTIKRDLPEGFQRAEFLLEHGFLDLIVHRRELKTQIVRLMTMLAP.

Positions 23 to 279 constitute a CoA carboxyltransferase N-terminal domain; it reads MWWKCDECGA…IVRLMTMLAP (257 aa). 4 residues coordinate Zn(2+): C27, C30, C46, and C49. Residues 27-49 form a C4-type zinc finger; the sequence is CDECGAMLHKKQLEDNFYTCSEC.

The protein belongs to the AccD/PCCB family. As to quaternary structure, acetyl-CoA carboxylase is a heterohexamer composed of biotin carboxyl carrier protein (AccB), biotin carboxylase (AccC) and two subunits each of ACCase subunit alpha (AccA) and ACCase subunit beta (AccD). Requires Zn(2+) as cofactor.

It localises to the cytoplasm. The enzyme catalyses N(6)-carboxybiotinyl-L-lysyl-[protein] + acetyl-CoA = N(6)-biotinyl-L-lysyl-[protein] + malonyl-CoA. It participates in lipid metabolism; malonyl-CoA biosynthesis; malonyl-CoA from acetyl-CoA: step 1/1. Its function is as follows. Component of the acetyl coenzyme A carboxylase (ACC) complex. Biotin carboxylase (BC) catalyzes the carboxylation of biotin on its carrier protein (BCCP) and then the CO(2) group is transferred by the transcarboxylase to acetyl-CoA to form malonyl-CoA. The protein is Acetyl-coenzyme A carboxylase carboxyl transferase subunit beta of Chlorobium phaeobacteroides (strain DSM 266 / SMG 266 / 2430).